A 259-amino-acid chain; its full sequence is Gene 2 protein (259 aa).

2 stretches are compositionally biased toward basic and acidic residues: residues 1–12 (MPPTELEKKRGE) and 21–36 (QKQHAPTDEKREAKRK). The tract at residues 1–36 (MPPTELEKKRGEYNQIAIDAQKQHAPTDEKREAKRK) is disordered.

This Mycobacterium (Mycobacteriophage L5) protein is Gene 2 protein (2).